A 177-amino-acid chain; its full sequence is T-cell receptor beta chain C region (177 aa).

The c region stretch occupies residues 1-150; it reads EDLANVSAPQ…GVLSATVLYE (150 aa). N-linked (GlcNAc...) asparagine glycans are attached at residues Asn-5 and Asn-22. Cys-31 and Cys-96 are joined by a disulfide. Residues 146-168 form a helical membrane-spanning segment; sequence TVLYEILLGKATLYAVLVSALVL. At 169-177 the chain is on the cytoplasmic side; that stretch reads MAMVKRKDS.

The protein localises to the membrane. The protein is T-cell receptor beta chain C region of Oryctolagus cuniculus (Rabbit).